The chain runs to 119 residues: MSYINKPGKTRAWRKMVSRQQVSDVISHGSIVTTKTKAKESQRHVDHLITLAKKNTLASRRAAAAILLGTNQHSADDLLRKLFNELGPKYANRAGGYTRVIKLGNRPGDNTEEAVLQLV.

The protein belongs to the bacterial ribosomal protein bL17 family. As to quaternary structure, part of the 50S ribosomal subunit. Contacts protein L32.

The polypeptide is Large ribosomal subunit protein bL17 (Ureaplasma parvum serovar 3 (strain ATCC 27815 / 27 / NCTC 11736)).